A 416-amino-acid chain; its full sequence is Muscle-specific homeobox protein tinman (416 aa).

Polar residues-rich tracts occupy residues 1–11 (MLQHHQQQAQS) and 18–33 (YTQSPSPGSLTNADAL). Disordered stretches follow at residues 1–33 (MLQHHQQQAQSGGYYDHYTQSPSPGSLTNADAL), 246–305 (TASN…RKPR), and 391–416 (VMWPPTMQQSQQQQQHHAQQQQMQHM). A compositionally biased stretch (low complexity) spans 281 to 295 (NSISGNSNPGSNSGS). Positions 301 to 360 (KRKPRVLFSQAQVLELECRFRLKKYLTGAEREIIAQKLNLSATQVKIWFQNRRYKSKRGD) form a DNA-binding region, homeobox. Over residues 397 to 416 (MQQSQQQQQHHAQQQQMQHM) the composition is skewed to low complexity.

It is found in the nucleus. Its function is as follows. Required for the development of heart and visceral muscle; for the formation of somatic muscles. Has a crucial function in the early mesodermal subdivisions. The protein is Muscle-specific homeobox protein tinman (tin) of Drosophila melanogaster (Fruit fly).